The chain runs to 114 residues: Tyrosine-protein phosphatase 13 (114 aa).

The 114-residue stretch at 1 to 114 (WRMLWEHNST…QFGQEGPITI (114 aa)) folds into the Tyrosine-protein phosphatase domain. E82 contacts substrate.

Belongs to the protein-tyrosine phosphatase family.

The enzyme catalyses O-phospho-L-tyrosyl-[protein] + H2O = L-tyrosyl-[protein] + phosphate. This Styela plicata (Wrinkled sea squirt) protein is Tyrosine-protein phosphatase 13 (STY-13).